The chain runs to 479 residues: Trigger factor (479 aa).

Residues 174-261 (GDIAVVSFSG…LKELKTRELP (88 aa)) form the PPIase FKBP-type domain. A disordered region spans residues 437 to 479 (KVLESEAKTSKPAAKSKGSKTKSTKTKTNKAKTEKPASDKTKS). Positions 453–466 (KGSKTKSTKTKTNK) are enriched in basic residues. The segment covering 467–479 (AKTEKPASDKTKS) has biased composition (basic and acidic residues).

The protein belongs to the FKBP-type PPIase family. Tig subfamily.

It localises to the cytoplasm. The enzyme catalyses [protein]-peptidylproline (omega=180) = [protein]-peptidylproline (omega=0). Involved in protein export. Acts as a chaperone by maintaining the newly synthesized protein in an open conformation. Functions as a peptidyl-prolyl cis-trans isomerase. This Prochlorococcus marinus (strain MIT 9303) protein is Trigger factor.